Consider the following 512-residue polypeptide: Probable cytochrome P450 6d2 (512 aa).

Residue C457 participates in heme binding.

This sequence belongs to the cytochrome P450 family. It depends on heme as a cofactor.

The protein resides in the endoplasmic reticulum membrane. It localises to the microsome membrane. In terms of biological role, may be involved in the metabolism of insect hormones and in the breakdown of synthetic insecticides. This is Probable cytochrome P450 6d2 (Cyp6d2) from Drosophila melanogaster (Fruit fly).